The chain runs to 547 residues: Threonine synthase (547 aa).

Residue K117 is modified to N6-(pyridoxal phosphate)lysine. 5 residues coordinate pyridoxal 5'-phosphate: G272, N273, F274, D276, and T471.

This sequence belongs to the threonine synthase family. Pyridoxal 5'-phosphate serves as cofactor.

The enzyme catalyses O-phospho-L-homoserine + H2O = L-threonine + phosphate. It functions in the pathway amino-acid biosynthesis; L-threonine biosynthesis; L-threonine from L-aspartate: step 5/5. Functionally, catalyzes the gamma-elimination of phosphate from L-phosphohomoserine and the beta-addition of water to produce L-threonine. The sequence is that of Threonine synthase from Cryptococcus neoformans var. grubii serotype A (strain H99 / ATCC 208821 / CBS 10515 / FGSC 9487) (Filobasidiella neoformans var. grubii).